Here is a 527-residue protein sequence, read N- to C-terminus: PTS system maltose-specific EIICB component (527 aa).

The 418-residue stretch at Met1–Lys418 folds into the PTS EIIC type-1 domain. Helical transmembrane passes span Phe8–Ile28, Gly59–Ala79, Val93–Gly113, Ile132–Leu152, Tyr173–Trp193, Ile200–Phe220, Ile224–Val244, Phe276–Val296, Leu305–Pro325, Ile326–Ala346, Val357–Phe377, and Met382–Phe402. Residues Asp449 to Gln527 form the PTS EIIB type-1 domain. Cys471 serves as the catalytic Phosphocysteine intermediate; for EIIB activity.

It localises to the cell membrane. It carries out the reaction D-maltose(out) + N(pros)-phospho-L-histidyl-[protein] = alpha-maltose 6'-phosphate(in) + L-histidyl-[protein]. Functionally, the phosphoenolpyruvate-dependent sugar phosphotransferase system (sugar PTS), a major carbohydrate active transport system, catalyzes the phosphorylation of incoming sugar substrates concomitantly with their translocation across the cell membrane. This system is involved in maltose transport. This Bacillus subtilis (strain 168) protein is PTS system maltose-specific EIICB component.